An 81-amino-acid polypeptide reads, in one-letter code: MKTLLLTLVVVTIVCLDLGYTLTCCNQQSSQPKTTTDCADNSCYKMTWRDHRGTRIERGCGCPQVKPGIKLECCKTNECNN.

An N-terminal signal peptide occupies residues methionine 1–threonine 21. Cystine bridges form between cysteine 24–cysteine 43, cysteine 38–cysteine 60, cysteine 62–cysteine 73, and cysteine 74–cysteine 79.

It belongs to the three-finger toxin family. Short-chain subfamily. Type I alpha-neurotoxin sub-subfamily. In terms of tissue distribution, expressed by the venom gland.

The protein localises to the secreted. Functionally, binds to muscle nicotinic acetylcholine receptor (nAChR) and inhibit acetylcholine from binding to the receptor, thereby impairing neuromuscular transmission. The protein is Short neurotoxin B of Aipysurus laevis (Olive sea snake).